Reading from the N-terminus, the 641-residue chain is 1-deoxy-D-xylulose-5-phosphate synthase (641 aa).

Thiamine diphosphate contacts are provided by residues His-78 and 119-121 (AHS). Asp-150 contacts Mg(2+). Thiamine diphosphate contacts are provided by residues 151–152 (GA), Asn-179, Tyr-288, and Glu-370. A Mg(2+)-binding site is contributed by Asn-179.

It belongs to the transketolase family. DXPS subfamily. As to quaternary structure, homodimer. Mg(2+) is required as a cofactor. It depends on thiamine diphosphate as a cofactor.

It catalyses the reaction D-glyceraldehyde 3-phosphate + pyruvate + H(+) = 1-deoxy-D-xylulose 5-phosphate + CO2. It functions in the pathway metabolic intermediate biosynthesis; 1-deoxy-D-xylulose 5-phosphate biosynthesis; 1-deoxy-D-xylulose 5-phosphate from D-glyceraldehyde 3-phosphate and pyruvate: step 1/1. In terms of biological role, catalyzes the acyloin condensation reaction between C atoms 2 and 3 of pyruvate and glyceraldehyde 3-phosphate to yield 1-deoxy-D-xylulose-5-phosphate (DXP). This Azorhizobium caulinodans (strain ATCC 43989 / DSM 5975 / JCM 20966 / LMG 6465 / NBRC 14845 / NCIMB 13405 / ORS 571) protein is 1-deoxy-D-xylulose-5-phosphate synthase.